Here is a 466-residue protein sequence, read N- to C-terminus: RUS family member 1 (466 aa).

Alanine 2 is subject to N-acetylalanine. A helical transmembrane segment spans residues 245–265 (LLMLPLVSDCLSLSLGCFILL).

It belongs to the RUS1 family.

It is found in the membrane. The protein is RUS family member 1 (Rusf1) of Rattus norvegicus (Rat).